The sequence spans 317 residues: Cold tolerance protein 1 (317 aa).

It belongs to the CTO1 family.

Functionally, protein required for cold tolerance. Plays a role in the regulation of phosphate uptake. In Saccharomyces cerevisiae (strain ATCC 204508 / S288c) (Baker's yeast), this protein is Cold tolerance protein 1.